The chain runs to 180 residues: Negative modulator of initiation of replication (180 aa).

3 interaction with DNA regions span residues 86–87 (AV), 115–119 (RTRVY), and 149–155 (NTNTGRK).

This sequence belongs to the SeqA family. Homodimer. Polymerizes to form helical filaments.

The protein localises to the cytoplasm. In terms of biological role, negative regulator of replication initiation, which contributes to regulation of DNA replication and ensures that replication initiation occurs exactly once per chromosome per cell cycle. Binds to pairs of hemimethylated GATC sequences in the oriC region, thus preventing assembly of replication proteins and re-initiation at newly replicated origins. Repression is relieved when the region becomes fully methylated. The sequence is that of Negative modulator of initiation of replication from Salmonella typhimurium (strain LT2 / SGSC1412 / ATCC 700720).